Here is a 153-residue protein sequence, read N- to C-terminus: Peptide deformylase (153 aa).

Fe cation is bound by residues cysteine 87 and histidine 129. Residue glutamate 130 is part of the active site. Histidine 133 is a binding site for Fe cation.

Belongs to the polypeptide deformylase family. Requires Fe(2+) as cofactor.

It catalyses the reaction N-terminal N-formyl-L-methionyl-[peptide] + H2O = N-terminal L-methionyl-[peptide] + formate. Its function is as follows. Removes the formyl group from the N-terminal Met of newly synthesized proteins. Requires at least a dipeptide for an efficient rate of reaction. N-terminal L-methionine is a prerequisite for activity but the enzyme has broad specificity at other positions. In Dictyoglomus turgidum (strain DSM 6724 / Z-1310), this protein is Peptide deformylase.